The sequence spans 403 residues: Calcium-responsive transactivator (403 aa).

Positions 1-148 (MSVAFASARP…TLPTTTMSMA (148 aa)) are N-terminal auto-inhibitory domain. The short motif at 50–53 (YQQI) is the SH2-binding element. Disordered stretches follow at residues 72-111 (QSLLPAPPTQNMNLGPGGMSQTGPSQTLHSQGNLSEALGS), 152-171 (HGSAPGYSHTVPSSQNVPMQ), 224-303 (NQSS…RTFE), and 318-403 (SQQQ…NYQQ). Polar residues-rich tracts occupy residues 92–105 (QTGPSQTLHSQGNL) and 161–171 (TVPSSQNVPMQ). The interval 149–238 (VSTHGSAPGY…GSSMMGQRPL (90 aa)) is methionine-rich intra-molecular domain. Residues 224–235 (NQSSQGSSMMGQ) are compositionally biased toward low complexity. The interval 252–324 (YLGQEEYYSE…AQYSQQQTGY (73 aa)) is MFD domain. Residues 263–277 (YGHSQGSSEAMTPQY) are compositionally biased toward polar residues. The segment covering 286–296 (YSYQQSSYGEQ) has biased composition (low complexity). Residues 341-403 (NQQNYPGQQQ…EQGQYGNYQQ (63 aa)) form a necessary for nuclear localization region. Positions 360–363 (SQYS) match the SH2-binding motif. The SH3-binding motif lies at 378–386 (TSQTTSTAQ). Residues 398 to 401 (YGNY) carry the SH2-binding motif.

The protein belongs to the SS18 family. As to quaternary structure, homodimer.

It is found in the nucleus. Transcriptional activator which may be required for calcium-dependent dendritic growth and branching in cortical neurons. The polypeptide is Calcium-responsive transactivator (ss18l1) (Xenopus laevis (African clawed frog)).